A 1074-amino-acid chain; its full sequence is Formin-G (1074 aa).

One can recognise a GBD/FH3 domain in the interval 34–423 (LQMQQGSKTY…DKINEFEKKI (390 aa)). 2 disordered regions span residues 476–507 (QSISPSQDSSNNQKASSSSSNTSTLNDSDIQS) and 549–639 (FTPT…NPSS). Residues 481–503 (SQDSSNNQKASSSSSNTSTLNDS) show a composition bias toward low complexity. Residues 502-530 (DSDIQSIQSSLKEATLEIERLKLAIEEKM) adopt a coiled-coil conformation. A compositionally biased stretch (polar residues) spans 549 to 561 (FTPTSPDISNDGQ). Over residues 568 to 610 (APPPSPSPPPPISGGGAPPPPPPPPPPPSGGGAPPPPPPPPPS) the composition is skewed to pro residues. The 27-residue stretch at 597–623 (GGGAPPPPPPPPPSGGKKAGAPGAPPT) folds into the FH1 domain. In terms of domain architecture, FH2 spans 631-1031 (NKPVINPSSK…ASGDNGAVQN (401 aa)). A coiled-coil region spans residues 914 to 971 (DINDLEKQFNISKNNCKKVLEANIPSSSKFQSTIGSFLEKTEIDIKNLKENQKNIVDS). The 37-residue stretch at 1037–1073 (GADPLAALANAIKLGQTGLRKRPGPENSSGGSQLNLN) folds into the DAD domain. The tract at residues 1053 to 1074 (TGLRKRPGPENSSGGSQLNLNK) is disordered. Positions 1062 to 1074 (ENSSGGSQLNLNK) are enriched in polar residues.

This sequence belongs to the formin homology family. Diaphanous subfamily. In terms of assembly, interacts (via GBD/FH3 domain) with activated Rho-GTPases.

Formins play an important role in the nucleation of actin and the formation of linear actin filaments. The sequence is that of Formin-G (forG) from Dictyostelium discoideum (Social amoeba).